The primary structure comprises 495 residues: Trimethylamine methyltransferase MttB1 (495 aa).

Position 334 (O334) is a non-standard amino acid, pyrrolysine.

This sequence belongs to the trimethylamine methyltransferase family. As to quaternary structure, can form a complex with MttC.

The enzyme catalyses Co(I)-[trimethylamine-specific corrinoid protein] + trimethylamine + H(+) = methyl-Co(III)-[trimethylamine-specific corrinoid protein] + dimethylamine. It participates in one-carbon metabolism; methanogenesis from trimethylamine. Its function is as follows. Catalyzes the transfer of a methyl group from trimethylamine to the corrinoid cofactor of MttC. The chain is Trimethylamine methyltransferase MttB1 (mttB1) from Methanosarcina acetivorans (strain ATCC 35395 / DSM 2834 / JCM 12185 / C2A).